The sequence spans 733 residues: Phosphoribosylformylglycinamidine synthase subunit PurL (733 aa).

The active site involves His-42. ATP is bound by residues Tyr-45 and Lys-84. Mg(2+) is bound at residue Glu-86. Substrate-binding positions include 87–90 (SHNH) and Arg-109. His-88 functions as the Proton acceptor in the catalytic mechanism. Asp-110 is a Mg(2+) binding site. Residue Gln-233 participates in substrate binding. Asp-261 serves as a coordination point for Mg(2+). 305–307 (ESQ) lines the substrate pocket. ATP is bound by residues Asp-489 and Gly-526. Position 527 (Asn-527) interacts with Mg(2+). Substrate is bound at residue Ser-529.

This sequence belongs to the FGAMS family. In terms of assembly, monomer. Part of the FGAM synthase complex composed of 1 PurL, 1 PurQ and 2 PurS subunits.

The protein localises to the cytoplasm. It catalyses the reaction N(2)-formyl-N(1)-(5-phospho-beta-D-ribosyl)glycinamide + L-glutamine + ATP + H2O = 2-formamido-N(1)-(5-O-phospho-beta-D-ribosyl)acetamidine + L-glutamate + ADP + phosphate + H(+). It functions in the pathway purine metabolism; IMP biosynthesis via de novo pathway; 5-amino-1-(5-phospho-D-ribosyl)imidazole from N(2)-formyl-N(1)-(5-phospho-D-ribosyl)glycinamide: step 1/2. Part of the phosphoribosylformylglycinamidine synthase complex involved in the purines biosynthetic pathway. Catalyzes the ATP-dependent conversion of formylglycinamide ribonucleotide (FGAR) and glutamine to yield formylglycinamidine ribonucleotide (FGAM) and glutamate. The FGAM synthase complex is composed of three subunits. PurQ produces an ammonia molecule by converting glutamine to glutamate. PurL transfers the ammonia molecule to FGAR to form FGAM in an ATP-dependent manner. PurS interacts with PurQ and PurL and is thought to assist in the transfer of the ammonia molecule from PurQ to PurL. This Moorella thermoacetica (strain ATCC 39073 / JCM 9320) protein is Phosphoribosylformylglycinamidine synthase subunit PurL.